A 361-amino-acid polypeptide reads, in one-letter code: MTSADSLLFTSLGPSPSSGDGDCKFNEEFKFILLPLSYAVVFVLGLALNAPTLWLFLFRLRPWDATATYMFHLALSDTLYVLSLPTLVYYYAARNHWPFGTGFCKFVRFLFYWNLYCSVLFLTCISVHRYMGICHPLRAIRWGRPRFAGLLCLGVWLVVAGCLVPNLFFVTTNANGTTILCHDTTLPEEFDHYVYFSSTIMVLLFGFPFLITLVCYGLMARRLYRPLPGAGQSSSRLRSLRTIAVVLTVFAVCFVPFHITRTIYYLARLLNAECRVLNIVNVVYKVTRPLASANSCLDPVLYLFTGDKYRNQLQQLCRGSTPKRRTTASSLALVTLHEESISRWADIHQDSIFPAYEGDRL.

The Extracellular segment spans residues 1–30; sequence MTSADSLLFTSLGPSPSSGDGDCKFNEEFK. Residues 31–58 form a helical membrane-spanning segment; sequence FILLPLSYAVVFVLGLALNAPTLWLFLF. The Cytoplasmic portion of the chain corresponds to 59–68; it reads RLRPWDATAT. Residues 69-91 traverse the membrane as a helical segment; it reads YMFHLALSDTLYVLSLPTLVYYY. The Extracellular segment spans residues 92–108; the sequence is AARNHWPFGTGFCKFVR. Cysteines 104 and 181 form a disulfide. A helical membrane pass occupies residues 109 to 127; it reads FLFYWNLYCSVLFLTCISV. Topologically, residues 128-149 are cytoplasmic; the sequence is HRYMGICHPLRAIRWGRPRFAG. Residues 150–170 traverse the membrane as a helical segment; sequence LLCLGVWLVVAGCLVPNLFFV. Over 171-192 the chain is Extracellular; that stretch reads TTNANGTTILCHDTTLPEEFDH. N175 carries an N-linked (GlcNAc...) asparagine glycan. A helical transmembrane segment spans residues 193–218; that stretch reads YVYFSSTIMVLLFGFPFLITLVCYGL. Residues 219–242 are Cytoplasmic-facing; it reads MARRLYRPLPGAGQSSSRLRSLRT. A helical transmembrane segment spans residues 243-265; that stretch reads IAVVLTVFAVCFVPFHITRTIYY. The Extracellular portion of the chain corresponds to 266 to 283; it reads LARLLNAECRVLNIVNVV. Residues 284–305 traverse the membrane as a helical segment; sequence YKVTRPLASANSCLDPVLYLFT. The Cytoplasmic segment spans residues 306 to 361; that stretch reads GDKYRNQLQQLCRGSTPKRRTTASSLALVTLHEESISRWADIHQDSIFPAYEGDRL.

Belongs to the G-protein coupled receptor 1 family. Phosphorylation of Ser-329 and Ser-330 is a key step in agonist-dependent desensitization and loss of surface P2RY4. This phosphorylation does not involve PKC, nor other calcium-activated kinases. Expressed in the liver, intestine, stomach, bladder and lung.

The protein resides in the cell membrane. Receptor for ATP and UTP coupled to G-proteins that activate a phosphatidylinositol-calcium second messenger system. In Mus musculus (Mouse), this protein is P2Y purinoceptor 4 (P2ry4).